Consider the following 370-residue polypeptide: Ubiquitin carboxyl-terminal hydrolase 12-B (370 aa).

One can recognise a USP domain in the interval 39 to 369; the sequence is FGLVNFGNTC…SGYILFYQSR (331 aa). Cys-48 functions as the Nucleophile in the catalytic mechanism. The segment at 145–168 is disordered; the sequence is KQEKQNGRIPNGNIDNENNNNTPD. The span at 155 to 165 shows a compositional bias: low complexity; it reads NGNIDNENNNN. Cys-186, Cys-189, Cys-233, and Cys-236 together coordinate Zn(2+). The active-site Proton acceptor is the His-317.

The protein belongs to the peptidase C19 family. USP12/USP46 subfamily. In terms of assembly, interacts with WDR48.

The catalysed reaction is Thiol-dependent hydrolysis of ester, thioester, amide, peptide and isopeptide bonds formed by the C-terminal Gly of ubiquitin (a 76-residue protein attached to proteins as an intracellular targeting signal).. In terms of biological role, deubiquitinating enzyme. Has almost no deubiquitinating activity by itself and requires the interaction with wdr48 to have a high activity. The protein is Ubiquitin carboxyl-terminal hydrolase 12-B (usp12-b) of Xenopus laevis (African clawed frog).